The sequence spans 177 residues: Endoribonuclease YbeY (177 aa).

3 residues coordinate Zn(2+): His-118, His-122, and His-128.

It belongs to the endoribonuclease YbeY family. The cofactor is Zn(2+).

It localises to the cytoplasm. Functionally, single strand-specific metallo-endoribonuclease involved in late-stage 70S ribosome quality control and in maturation of the 3' terminus of the 16S rRNA. The polypeptide is Endoribonuclease YbeY (Mycobacterium sp. (strain JLS)).